Reading from the N-terminus, the 541-residue chain is Phosphoenolpyruvate carboxykinase (ATP) (541 aa).

Residues R67, Y207, and K213 each contribute to the substrate site. Residues K213, H232, and 248-256 each bind ATP; that span reads GLSGTGKTT. K213 and H232 together coordinate Mn(2+). Residue D269 coordinates Mn(2+). ATP is bound by residues E297, R333, 449-450, and T455; that span reads RI. R333 contributes to the substrate binding site.

Belongs to the phosphoenolpyruvate carboxykinase (ATP) family. Monomer. Requires Mn(2+) as cofactor.

It is found in the cytoplasm. It catalyses the reaction oxaloacetate + ATP = phosphoenolpyruvate + ADP + CO2. The protein operates within carbohydrate biosynthesis; gluconeogenesis. Functionally, involved in the gluconeogenesis. Catalyzes the conversion of oxaloacetate (OAA) to phosphoenolpyruvate (PEP) through direct phosphoryl transfer between the nucleoside triphosphate and OAA. The protein is Phosphoenolpyruvate carboxykinase (ATP) of Vibrio atlanticus (strain LGP32) (Vibrio splendidus (strain Mel32)).